A 282-amino-acid polypeptide reads, in one-letter code: Putative 4-diphosphocytidyl-2-C-methyl-D-erythritol kinase (282 aa).

K9 is an active-site residue. 93 to 103 (PVSAGLAGGSA) is a binding site for ATP. The active site involves D135.

Belongs to the GHMP kinase family. IspE subfamily.

It carries out the reaction 4-CDP-2-C-methyl-D-erythritol + ATP = 4-CDP-2-C-methyl-D-erythritol 2-phosphate + ADP + H(+). Its function is as follows. Catalyzes the phosphorylation of the position 2 hydroxy group of 4-diphosphocytidyl-2C-methyl-D-erythritol. The protein is Putative 4-diphosphocytidyl-2-C-methyl-D-erythritol kinase of Staphylococcus aureus (strain bovine RF122 / ET3-1).